The following is a 297-amino-acid chain: Protoheme IX farnesyltransferase 1 (297 aa).

A run of 9 helical transmembrane segments spans residues Val23 to Val43, Trp45 to Val65, Leu93 to Phe113, Leu117 to Leu137, Ile145 to Gly165, Pro171 to Ile191, Leu216 to His236, Leu241 to Tyr261, and Ile277 to Leu297.

The protein belongs to the UbiA prenyltransferase family. Protoheme IX farnesyltransferase subfamily.

The protein localises to the cell inner membrane. The enzyme catalyses heme b + (2E,6E)-farnesyl diphosphate + H2O = Fe(II)-heme o + diphosphate. It participates in porphyrin-containing compound metabolism; heme O biosynthesis; heme O from protoheme: step 1/1. Converts heme B (protoheme IX) to heme O by substitution of the vinyl group on carbon 2 of heme B porphyrin ring with a hydroxyethyl farnesyl side group. In Pseudomonas putida (strain ATCC 700007 / DSM 6899 / JCM 31910 / BCRC 17059 / LMG 24140 / F1), this protein is Protoheme IX farnesyltransferase 1.